We begin with the raw amino-acid sequence, 116 residues long: Large ribosomal subunit protein bL20c (116 aa).

It belongs to the bacterial ribosomal protein bL20 family.

Its subcellular location is the plastid. The protein resides in the chloroplast. Its function is as follows. Binds directly to 23S ribosomal RNA and is necessary for the in vitro assembly process of the 50S ribosomal subunit. It is not involved in the protein synthesizing functions of that subunit. The polypeptide is Large ribosomal subunit protein bL20c (Rhodomonas salina (Cryptomonas salina)).